Reading from the N-terminus, the 79-residue chain is Protein FAM236C (79 aa).

Residues 19 to 48 (KGPQKDPEELVAVSDTAEDPSSGTGLPREP) are disordered.

This sequence belongs to the FAM236 family.

The polypeptide is Protein FAM236C (Homo sapiens (Human)).